The chain runs to 437 residues: ATP-dependent RNA helicase RhlB (437 aa).

The short motif at 9–37 is the Q motif element; sequence QKFADLGLEPTVLEGLDAQGFHYCTPIQA. A Helicase ATP-binding domain is found at 40 to 219; sequence LPVVLTGQDI…FEHMNSPESV (180 aa). 53-60 contacts ATP; it reads AQTGTGKT. The DEAD box signature appears at 165 to 168; the sequence is DEAD. Residues 245 to 390 form the Helicase C-terminal domain; it reads RLLQTLIEEE…LSKYNSEALL (146 aa). Residues 395-437 form a disordered region; that stretch reads APLRLQRTPRQGGNRRPNGNRQGQGQSRPRNNNRRHPQSQKQQ. Positions 400–424 are enriched in low complexity; it reads QRTPRQGGNRRPNGNRQGQGQSRPR. The span at 425–437 shows a compositional bias: basic residues; the sequence is NNNRRHPQSQKQQ.

The protein belongs to the DEAD box helicase family. RhlB subfamily. Component of the RNA degradosome, which is a multiprotein complex involved in RNA processing and mRNA degradation.

It localises to the cytoplasm. The catalysed reaction is ATP + H2O = ADP + phosphate + H(+). In terms of biological role, DEAD-box RNA helicase involved in RNA degradation. Has RNA-dependent ATPase activity and unwinds double-stranded RNA. The protein is ATP-dependent RNA helicase RhlB of Photobacterium profundum (strain SS9).